Here is a 942-residue protein sequence, read N- to C-terminus: Homeobox transcription factor phx1 (942 aa).

Composition is skewed to polar residues over residues 1–19 (MRSY…NINY), 61–73 (HLQG…TNPN), 99–116 (ADNN…TNPS), and 122–135 (IVKS…SKQN). Disordered stretches follow at residues 1 to 54 (MRSY…MQLP), 61 to 80 (HLQG…PEFD), 87 to 172 (KQEK…KKQR), 604 to 651 (WANQ…STST), and 892 to 922 (SSSG…DVYS). The segment covering 142-151 (SVEKAKENVA) has biased composition (basic and acidic residues). A compositionally biased stretch (low complexity) spans 153–164 (ESGTPESGGSTS). The segment at residues 164–224 (SAPKSKKQRL…QNRRAKSKLI (61 aa)) is a DNA-binding region (homeobox). Composition is skewed to polar residues over residues 604–614 (WANQLPRQPDS) and 630–641 (SHDTSSEYGNKS).

It is found in the nucleus. Functionally, trnascription factor that regulates the expression of the homocitrate synthase (HCS) lys4. The chain is Homeobox transcription factor phx1 (phx1) from Schizosaccharomyces pombe (strain 972 / ATCC 24843) (Fission yeast).